The primary structure comprises 335 residues: Transcriptional adapter 1 (335 aa).

It belongs to the TADA1 family. As to quaternary structure, component of the STAGA transcription coactivator-HAT complex, at least composed of SUPT3H, GCN5L2, TAF5L, TAF6L, SUPT7L, TADA3L, TAD1L, TAF10, TAF12, TRRAP and TAF9.

Its subcellular location is the nucleus. Its function is as follows. Probably involved in transcriptional regulation. The protein is Transcriptional adapter 1 (Tada1) of Mus musculus (Mouse).